Here is a 119-residue protein sequence, read N- to C-terminus: Large ribosomal subunit protein bL20 (119 aa).

The protein belongs to the bacterial ribosomal protein bL20 family.

Binds directly to 23S ribosomal RNA and is necessary for the in vitro assembly process of the 50S ribosomal subunit. It is not involved in the protein synthesizing functions of that subunit. The polypeptide is Large ribosomal subunit protein bL20 (Bordetella bronchiseptica (strain ATCC BAA-588 / NCTC 13252 / RB50) (Alcaligenes bronchisepticus)).